We begin with the raw amino-acid sequence, 644 residues long: Exoribonuclease 2 (644 aa).

The RNB domain occupies 189–516; sequence RRDLTALDFV…NHRLLKAIIK (328 aa). In terms of domain architecture, S1 motif spans 561 to 643; it reads DTRFAAEILD…ETRSIIARPA (83 aa).

Belongs to the RNR ribonuclease family. RNase II subfamily.

Its subcellular location is the cytoplasm. It carries out the reaction Exonucleolytic cleavage in the 3'- to 5'-direction to yield nucleoside 5'-phosphates.. Involved in mRNA degradation. Hydrolyzes single-stranded polyribonucleotides processively in the 3' to 5' direction. The protein is Exoribonuclease 2 of Klebsiella pneumoniae (strain 342).